The following is a 2548-amino-acid chain: Variant-silencing SET domain-containing protein (2548 aa).

A compositionally biased stretch (acidic residues) spans 37–48 (IDDDDDDDNDNN). 3 disordered regions span residues 37 to 61 (IDDD…KTNN), 336 to 379 (GDPK…DDDN), and 585 to 629 (SVDR…NTQT). Over residues 336-357 (GDPKKRIERNKQEIEDHRREQD) the composition is skewed to basic and acidic residues. Residues 358 to 378 (GENDQEEDNYDDYDDEDDDDD) are compositionally biased toward acidic residues. The span at 602–616 (NGSNNNNSSSNNNNN) shows a compositional bias: low complexity. Over residues 617-629 (ITHITNDCDNTQT) the composition is skewed to polar residues. The segment at 787–846 (FYLCEFCEQNIFDMNNMIKKDKAKECMYRCNISCGRTFHKACVCYIKNNDNYICFFCLYD) adopts a PHD-type 1 zinc-finger fold. Positions 929 to 944 (IKRRHIYRKRRRRGPR) are enriched in basic residues. 4 disordered regions span residues 929 to 1054 (IKRR…CDEN), 1546 to 1575 (EKNT…NTLD), 1713 to 1732 (EQGS…NNAK), and 1772 to 1822 (INNA…DDHR). Positions 986–1016 (DNNDDNNDNNDDNNDNNDDNNDNNDNNDDNN) are enriched in acidic residues. Composition is skewed to low complexity over residues 1017–1050 (NDNN…NNNN) and 1551–1572 (NKLC…TKYN). The segment covering 1714–1732 (QGSINNAKHNEQGSINNAK) has biased composition (polar residues). The region spanning 2067-2117 (SDDYKCLCQGECNLYTCYNSLSNIQCSKSRCNLPEKIQDRKCFNRPFRKSF) is the AWS domain. Residues 2119–2240 (KDLEIKKTEK…SGEEITYNYS (122 aa)) enclose the SET domain. Y2239 provides a ligand contact to S-adenosyl-L-methionine. Residues 2423–2471 (DEVCRKCKSCGNLTMCDKCFQSYHQLCGNMHSKMYKNNELVLCRFCQKY) form a PHD-type 2 zinc finger.

It belongs to the class V-like SAM-binding methyltransferase superfamily.

The protein resides in the nucleus. Its subcellular location is the chromosome. It carries out the reaction L-lysyl(36)-[histone H3] + 3 S-adenosyl-L-methionine = N(6),N(6),N(6)-trimethyl-L-lysyl(36)-[histone H3] + 3 S-adenosyl-L-homocysteine + 3 H(+). Histone methyltransferase that specifically represses expression of the surface antigen-coding var genes by mediating trimethylation of 'Lys-36' of histone H3 (H3K36me3) on var genes. SETVS-dependent H3K36me3 is specifically involved in var genes silencing, a central step malaria pathogenesis: each parasite contains 60 distinct var genes that each code for a different PfEMP1 protein. During infection, the clonal parasite population expresses only 1 gene at a time, while the 59 other var genes are silenced. The parasite then switches to the expression of a new variant antigen as an immune-evasion mechanism to avoid the host antibody response. Represses expression of both var mRNA and antisense long non-coding RNA. The polypeptide is Variant-silencing SET domain-containing protein (SETVS) (Plasmodium falciparum (isolate 3D7)).